Here is a 325-residue protein sequence, read N- to C-terminus: Mitochondrial citrate transporter C (325 aa).

Solcar repeat units follow at residues 15–105 (ASPA…YKQM), 117–208 (KATF…LKAF), and 221–310 (LPSY…LKGK). The next 6 membrane-spanning stretches (helical) occupy residues 21 to 41 (LIAG…LDTI), 82 to 102 (GAVL…YESY), 121 to 141 (LAGL…MEVV), 187 to 207 (TALR…ELKA), 221 to 241 (LPSY…PFSN), and 282 to 303 (FYKG…TFTV).

The protein belongs to the mitochondrial carrier (TC 2.A.29) family.

The protein localises to the mitochondrion inner membrane. Mitochondrial transporter that does not mediate citrate export from mitochondria to cytoplasm. Its exact function has still to be determined. The polypeptide is Mitochondrial citrate transporter C (Aspergillus niger (strain ATCC 1015 / CBS 113.46 / FGSC A1144 / LSHB Ac4 / NCTC 3858a / NRRL 328 / USDA 3528.7)).